The following is a 38-amino-acid chain: Plastocyanin (38 aa).

The Plastocyanin-like domain maps to 1 to 38 (AQTVEVKMGADGGLLVFEPAKAGPHNVVFDEDNIPPGV). Histidine 25 is a binding site for Cu cation.

It belongs to the plastocyanin family. Cu(2+) serves as cofactor.

The protein localises to the plastid. It localises to the chloroplast thylakoid membrane. Functionally, participates in electron transfer between P700 and the cytochrome b6-f complex in photosystem I. In Thalassiosira oceanica (Marine diatom), this protein is Plastocyanin (PETE).